The primary structure comprises 182 residues: Peptidyl-tRNA hydrolase (182 aa).

Tyr14 is a tRNA binding site. Catalysis depends on His19, which acts as the Proton acceptor. 3 residues coordinate tRNA: Phe64, Asn66, and Asn112.

The protein belongs to the PTH family. Monomer.

Its subcellular location is the cytoplasm. The catalysed reaction is an N-acyl-L-alpha-aminoacyl-tRNA + H2O = an N-acyl-L-amino acid + a tRNA + H(+). Hydrolyzes ribosome-free peptidyl-tRNAs (with 1 or more amino acids incorporated), which drop off the ribosome during protein synthesis, or as a result of ribosome stalling. In terms of biological role, catalyzes the release of premature peptidyl moieties from peptidyl-tRNA molecules trapped in stalled 50S ribosomal subunits, and thus maintains levels of free tRNAs and 50S ribosomes. The polypeptide is Peptidyl-tRNA hydrolase (Wolbachia sp. subsp. Drosophila simulans (strain wRi)).